The sequence spans 290 residues: Xyloglucan endotransglucosylase/hydrolase protein 3 (290 aa).

The first 21 residues, 1–21, serve as a signal peptide directing secretion; the sequence is MDYMRIFSVFVVTLWIIRVDA. One can recognise a GH16 domain in the interval 22–220; the sequence is RVFGGRGIEK…WSYSPFIAHF (199 aa). The active-site Nucleophile is the glutamate 109. The active-site Proton donor is the glutamate 113. Residues glutamate 113, 126-128, 136-138, 199-200, and glycine 204 each bind xyloglucan; these read QTN, NRE, and DW. An N-linked (GlcNAc...) asparagine glycan is attached at asparagine 210. 2 disulfides stabilise this stretch: cysteine 228–cysteine 240 and cysteine 276–cysteine 289.

It belongs to the glycosyl hydrolase 16 family. XTH group 1 subfamily. Post-translationally, contains at least one intrachain disulfide bond essential for its enzymatic activity. In terms of tissue distribution, predominantly expressed in flower buds.

Its subcellular location is the secreted. It is found in the cell wall. It localises to the extracellular space. The protein localises to the apoplast. The catalysed reaction is breaks a beta-(1-&gt;4) bond in the backbone of a xyloglucan and transfers the xyloglucanyl segment on to O-4 of the non-reducing terminal glucose residue of an acceptor, which can be a xyloglucan or an oligosaccharide of xyloglucan.. Functionally, catalyzes xyloglucan endohydrolysis (XEH) and/or endotransglycosylation (XET). Cleaves and religates xyloglucan polymers, an essential constituent of the primary cell wall, and thereby participates in cell wall construction of growing tissues. The polypeptide is Xyloglucan endotransglucosylase/hydrolase protein 3 (XTH3) (Arabidopsis thaliana (Mouse-ear cress)).